Consider the following 489-residue polypeptide: Type II restriction enzyme Sau3AI (489 aa).

The cofactor is Mg(2+).

It catalyses the reaction Endonucleolytic cleavage of DNA to give specific double-stranded fragments with terminal 5'-phosphates.. Functionally, an E and P subtype restriction enzyme that recognizes the double-stranded sequence 5'-GATC-3' and cleaves before G-1. The sequence is that of Type II restriction enzyme Sau3AI (sau3AIR) from Staphylococcus aureus.